We begin with the raw amino-acid sequence, 126 residues long: Putative regulator AldR (126 aa).

It belongs to the RutC family.

Functionally, implicated in the regulation of isoleucine biosynthesis. The sequence is that of Putative regulator AldR (aldR) from Lactococcus lactis subsp. lactis (strain IL1403) (Streptococcus lactis).